A 150-amino-acid chain; its full sequence is Lipoprotein signal peptidase (150 aa).

A run of 2 helical transmembrane segments spans residues 58 to 78 (FFII…FKST) and 85 to 107 (SFSL…GYVV). Residues Asp108 and Asp122 contribute to the active site. The chain crosses the membrane as a helical span at residues 117–137 (VFNLADFFITGGVLLLTFLIL).

This sequence belongs to the peptidase A8 family.

Its subcellular location is the cell membrane. The catalysed reaction is Release of signal peptides from bacterial membrane prolipoproteins. Hydrolyzes -Xaa-Yaa-Zaa-|-(S,diacylglyceryl)Cys-, in which Xaa is hydrophobic (preferably Leu), and Yaa (Ala or Ser) and Zaa (Gly or Ala) have small, neutral side chains.. It functions in the pathway protein modification; lipoprotein biosynthesis (signal peptide cleavage). Its function is as follows. This protein specifically catalyzes the removal of signal peptides from prolipoproteins. In Caldicellulosiruptor bescii (strain ATCC BAA-1888 / DSM 6725 / KCTC 15123 / Z-1320) (Anaerocellum thermophilum), this protein is Lipoprotein signal peptidase.